A 515-amino-acid polypeptide reads, in one-letter code: Spermatogenesis-associated protein 2 (515 aa).

The PUB domain occupies 78-150 (ALHCAFSMLE…VYKLKELVES (73 aa)). Positions 321–338 (TYFSTQDDVDLYTDSEPR) match the PIM motif motif. A disordered region spans residues 429–452 (GHQTQGLDRLAPVHSKPKPSTTAT).

This sequence belongs to the SPATA2 family. In terms of assembly, interacts (via the PIM motif) with RNF31/HOIP (via the PUB domain); the interaction is direct. Interacts (via the PUB domain) with CYLD; the interaction is direct. In terms of tissue distribution, widely expressed, with highest expression in testis, lung and intestine, and lower expression in brain, heart and spleen. Present at high level in Sertoli cells: expressed from stage I to stage XII of the testis seminiferous epithelium (at protein level).

It localises to the cytoplasm. The protein localises to the nucleus. Functionally, bridging factor that mediates the recruitment of CYLD to the LUBAC complex, thereby regulating TNF-alpha-induced necroptosis. Acts as a direct binding intermediate that bridges RNF31/HOIP, the catalytic subunit of the LUBAC complex, and the deubiquitinase (CYLD), thereby recruiting CYLD to the TNF-R1 signaling complex (TNF-RSC). Required to activate the 'Met-1'- (linear) and 'Lys-63'-linked deubiquitinase activities of CYLD. Controls the kinase activity of RIPK1 and TNF-alpha-induced necroptosis by promoting 'Met-1'-linked deubiquitination of RIPK1 by CYLD. This is Spermatogenesis-associated protein 2 from Mus musculus (Mouse).